Consider the following 676-residue polypeptide: XK-related protein 5 (676 aa).

7 helical membrane-spanning segments follow: residues 37-57 (WLAL…FLWF), 114-134 (LLEA…VFLA), 140-160 (IVPG…LVSY), 206-226 (VWVL…LVAQ), 239-259 (LFNL…WDSP), 266-286 (SFYL…TDFL), and 294-314 (LWTV…LVIY). 4 disordered regions span residues 336–362 (PIED…DSSS), 372–391 (TSLD…GLGE), 495–538 (LEDN…KEGQ), and 598–661 (PIPG…IQRD). A compositionally biased stretch (polar residues) spans 498 to 509 (NATTQKPPATQE).

This sequence belongs to the XK family.

The protein localises to the cell membrane. This chain is XK-related protein 5, found in Mus musculus (Mouse).